The following is a 376-amino-acid chain: UDP-N-acetylglucosamine--N-acetylmuramyl-(pentapeptide) pyrophosphoryl-undecaprenol N-acetylglucosamine transferase (376 aa).

UDP-N-acetyl-alpha-D-glucosamine-binding positions include 11 to 13, Asn-117, Arg-160, Ser-208, and Gln-310; that span reads TGG.

Belongs to the glycosyltransferase 28 family. MurG subfamily.

The protein resides in the cell inner membrane. The catalysed reaction is di-trans,octa-cis-undecaprenyl diphospho-N-acetyl-alpha-D-muramoyl-L-alanyl-D-glutamyl-meso-2,6-diaminopimeloyl-D-alanyl-D-alanine + UDP-N-acetyl-alpha-D-glucosamine = di-trans,octa-cis-undecaprenyl diphospho-[N-acetyl-alpha-D-glucosaminyl-(1-&gt;4)]-N-acetyl-alpha-D-muramoyl-L-alanyl-D-glutamyl-meso-2,6-diaminopimeloyl-D-alanyl-D-alanine + UDP + H(+). It functions in the pathway cell wall biogenesis; peptidoglycan biosynthesis. Its function is as follows. Cell wall formation. Catalyzes the transfer of a GlcNAc subunit on undecaprenyl-pyrophosphoryl-MurNAc-pentapeptide (lipid intermediate I) to form undecaprenyl-pyrophosphoryl-MurNAc-(pentapeptide)GlcNAc (lipid intermediate II). The sequence is that of UDP-N-acetylglucosamine--N-acetylmuramyl-(pentapeptide) pyrophosphoryl-undecaprenol N-acetylglucosamine transferase from Rickettsia conorii (strain ATCC VR-613 / Malish 7).